Consider the following 422-residue polypeptide: Gamma-glutamyl phosphate reductase (422 aa).

The protein belongs to the gamma-glutamyl phosphate reductase family.

It is found in the cytoplasm. The catalysed reaction is L-glutamate 5-semialdehyde + phosphate + NADP(+) = L-glutamyl 5-phosphate + NADPH + H(+). Its pathway is amino-acid biosynthesis; L-proline biosynthesis; L-glutamate 5-semialdehyde from L-glutamate: step 2/2. Functionally, catalyzes the NADPH-dependent reduction of L-glutamate 5-phosphate into L-glutamate 5-semialdehyde and phosphate. The product spontaneously undergoes cyclization to form 1-pyrroline-5-carboxylate. The polypeptide is Gamma-glutamyl phosphate reductase (Saccharophagus degradans (strain 2-40 / ATCC 43961 / DSM 17024)).